The primary structure comprises 397 residues: Enoyl-[acyl-carrier-protein] reductase [NADH] (397 aa).

Residues 48-53, 74-75, 111-112, and 139-140 each bind NAD(+); these read GASTGY, FE, DA, and AA. Tyr225 contributes to the substrate binding site. Residue Tyr235 is the Proton donor of the active site. NAD(+) contacts are provided by residues Lys244 and 273 to 275; that span reads VVT.

This sequence belongs to the TER reductase family. Monomer.

It carries out the reaction a 2,3-saturated acyl-[ACP] + NAD(+) = a (2E)-enoyl-[ACP] + NADH + H(+). The protein operates within lipid metabolism; fatty acid biosynthesis. In terms of biological role, involved in the final reduction of the elongation cycle of fatty acid synthesis (FAS II). Catalyzes the reduction of a carbon-carbon double bond in an enoyl moiety that is covalently linked to an acyl carrier protein (ACP). This is Enoyl-[acyl-carrier-protein] reductase [NADH] from Burkholderia pseudomallei (strain 1710b).